The chain runs to 257 residues: Probable ABC transporter arginine-binding protein ArtJ (257 aa).

An N-terminal signal peptide occupies residues 1-23 (MCIKRKKTWIAFLAVVCSFCLTG). N41, E48, G100, S102, R107, and Y151 together coordinate L-arginine.

The protein belongs to the bacterial solute-binding protein 3 family.

It is found in the secreted. Its subcellular location is the cell surface. In terms of biological role, probably part of an ABC transporter complex involved in arginine transport. Binds arginine. Interacts with host epithelial cells, suggesting a role in host-cell adhesion during infection. This Chlamydia trachomatis serovar D (strain ATCC VR-885 / DSM 19411 / UW-3/Cx) protein is Probable ABC transporter arginine-binding protein ArtJ.